The chain runs to 471 residues: Glutamate--tRNA ligase 1 (471 aa).

The 'HIGH' region motif lies at 15-25 (PSPTGYLHIGG). The short motif at 243–247 (KLSKR) is the 'KMSKS' region element. Residue K246 coordinates ATP.

The protein belongs to the class-I aminoacyl-tRNA synthetase family. Glutamate--tRNA ligase type 1 subfamily. In terms of assembly, monomer.

The protein localises to the cytoplasm. It catalyses the reaction tRNA(Glu) + L-glutamate + ATP = L-glutamyl-tRNA(Glu) + AMP + diphosphate. In terms of biological role, catalyzes the attachment of glutamate to tRNA(Glu) in a two-step reaction: glutamate is first activated by ATP to form Glu-AMP and then transferred to the acceptor end of tRNA(Glu). The sequence is that of Glutamate--tRNA ligase 1 from Cereibacter sphaeroides (strain ATCC 17029 / ATH 2.4.9) (Rhodobacter sphaeroides).